We begin with the raw amino-acid sequence, 429 residues long: Glutamate-1-semialdehyde 2,1-aminomutase 1 (429 aa).

At lysine 268 the chain carries N6-(pyridoxal phosphate)lysine.

Belongs to the class-III pyridoxal-phosphate-dependent aminotransferase family. HemL subfamily. Homodimer. Pyridoxal 5'-phosphate serves as cofactor.

It is found in the cytoplasm. The enzyme catalyses (S)-4-amino-5-oxopentanoate = 5-aminolevulinate. It functions in the pathway porphyrin-containing compound metabolism; protoporphyrin-IX biosynthesis; 5-aminolevulinate from L-glutamyl-tRNA(Glu): step 2/2. The protein is Glutamate-1-semialdehyde 2,1-aminomutase 1 of Staphylococcus haemolyticus (strain JCSC1435).